The chain runs to 389 residues: Na(+)/H(+) antiporter NhaA 1 (389 aa).

Helical transmembrane passes span 12–32 (VLNE…ALLV), 62–82 (FLLW…GLEL), 97–117 (IVLP…LFAL), 128–148 (GWAI…MMCG), 157–177 (IFLL…IAIF), 184–204 (IVAF…NILG), 220–240 (ISVL…AFFI), 260–280 (FWLA…VNLS), 282–302 (IDIG…LFVG), 331–351 (LYGV…IDGL), and 365–385 (LAIL…LKFF).

This sequence belongs to the NhaA Na(+)/H(+) (TC 2.A.33) antiporter family.

It is found in the cell inner membrane. The catalysed reaction is Na(+)(in) + 2 H(+)(out) = Na(+)(out) + 2 H(+)(in). In terms of biological role, na(+)/H(+) antiporter that extrudes sodium in exchange for external protons. This Campylobacter jejuni subsp. jejuni serotype O:6 (strain 81116 / NCTC 11828) protein is Na(+)/H(+) antiporter NhaA 1.